The sequence spans 458 residues: Sulfite efflux pump SSU1 (458 aa).

Over 1–11 the chain is Cytoplasmic; the sequence is MVANWVLALTR. Residues 12–32 form a helical membrane-spanning segment; it reads QFDPFMFMMVMGVGISSNILY. Residues 33-48 lie on the Extracellular side of the membrane; it reads SFPYPARWLRICSYIM. A helical membrane pass occupies residues 49-69; that stretch reads FAIACLIFIAVQALQILHLIV. Residues 70–89 lie on the Cytoplasmic side of the membrane; that stretch reads YIKEKSFREYFNDFFRNMKH. Residues 90–110 form a helical membrane-spanning segment; the sequence is NLFWGTYPMGLVTIINFLGAL. The Extracellular segment spans residues 111–135; that stretch reads SKANTTKSPTNARNLMIFVYVLWWY. The helical transmembrane segment at 136–156 threads the bilayer; it reads DLAVCLVIAWGISFLIWHDYY. Residues 157–176 are Cytoplasmic-facing; sequence PLEGIGNYPSYNIKMASENM. A helical transmembrane segment spans residues 177–197; it reads KSVLLLDIIPLVVVASSCGTF. The Extracellular segment spans residues 198-220; it reads TMSEIFFHAFNRNIQLITLVICA. Residues 221 to 241 form a helical membrane-spanning segment; it reads LTWLHAIIFVFILIAIYFWSL. Topologically, residues 242–252 are cytoplasmic; it reads YINKIPPMTQV. The helical transmembrane segment at 253 to 275 threads the bilayer; that stretch reads FTLFLLLGPMGQGSFGVLLLTDN. Topologically, residues 276–309 are extracellular; that stretch reads IKKYAGKYYPTDNITREQEILTIAVPWCFKILGM. Residues 310–330 traverse the membrane as a helical segment; it reads VSAMALLAMGYFFTVISVVSI. The Cytoplasmic segment spans residues 331-350; that stretch reads LSYYNKKEIENETGKVKRVY. A helical membrane pass occupies residues 351–371; it reads TFHKGFWGMTFPMGTMSLGNE. The Extracellular segment spans residues 372–387; the sequence is ELYVQYNQYVPLYAFR. The helical transmembrane segment at 388-408 threads the bilayer; sequence VLGTIYGGVCVCWSILCLLCT. Residues 409-458 are Cytoplasmic-facing; that stretch reads LHEYSKKMLHAARKSSLFSESGTEKTTVSPYNSIESVEESNSALDFTRLA. Ser444, Ser448, and Ser450 each carry phosphoserine.

The protein belongs to the tellurite-resistance/dicarboxylate transporter (TDT) family.

Its subcellular location is the cell membrane. In terms of biological role, involved in efflux of free sulfite. Mutations in the SSU1 gene cause sensitivity to sulfite. This Saccharomyces cerevisiae (strain ATCC 204508 / S288c) (Baker's yeast) protein is Sulfite efflux pump SSU1 (SSU1).